A 1443-amino-acid chain; its full sequence is ARF guanine-nucleotide exchange factor GNL1 (1443 aa).

An SEC7 domain is found at Phe-554 to Ser-743. Glu-658 is an active-site residue. 2 disordered regions span residues Asp-917–Arg-949 and Asp-1424–Val-1443. The span at Val-939–Arg-949 shows a compositional bias: polar residues. The segment covering Gln-1425–Asp-1435 has biased composition (basic and acidic residues).

As to quaternary structure, homodimer.

It is found in the cytoplasm. It localises to the cytosol. The protein resides in the golgi apparatus membrane. Functionally, activates the ARF proteins by exchanging bound GDP for free GTP. Plays a role in vesicular protein sorting. Acts as the major regulator of retrograde Golgi to endoplasmic reticulum trafficking but is also involved in the endocytosis process. Could function redundantly with GNOM. Regulates vesicle trafficking required for the coordinated polar localization of auxin efflux carriers which in turn determines the direction of auxin flow. Mediates the endocytosis of PIN2 from plasma membrane to endosomal compartments. Required for maintenance of endoplasmic reticulum morphology. This chain is ARF guanine-nucleotide exchange factor GNL1 (GNL1), found in Arabidopsis thaliana (Mouse-ear cress).